We begin with the raw amino-acid sequence, 204 residues long: Holliday junction branch migration complex subunit RuvA (204 aa).

The segment at 1–63 is domain I; the sequence is MIGKLSGKVD…EEHIHLYGFL (63 aa). Residues 64-142 form a domain II region; the sequence is TLEEKIFFNL…KISSGSAIIK (79 aa). Residues 143–149 form a flexible linker region; the sequence is ESLNIKN. Positions 150–204 are domain III; sequence ITPVASNEVIKALVNLGFSRFEAQNAVQGIITQNPEISIDELIKTALKNRNSNFS.

The protein belongs to the RuvA family. In terms of assembly, homotetramer. Forms an RuvA(8)-RuvB(12)-Holliday junction (HJ) complex. HJ DNA is sandwiched between 2 RuvA tetramers; dsDNA enters through RuvA and exits via RuvB. An RuvB hexamer assembles on each DNA strand where it exits the tetramer. Each RuvB hexamer is contacted by two RuvA subunits (via domain III) on 2 adjacent RuvB subunits; this complex drives branch migration. In the full resolvosome a probable DNA-RuvA(4)-RuvB(12)-RuvC(2) complex forms which resolves the HJ.

It is found in the cytoplasm. The RuvA-RuvB-RuvC complex processes Holliday junction (HJ) DNA during genetic recombination and DNA repair, while the RuvA-RuvB complex plays an important role in the rescue of blocked DNA replication forks via replication fork reversal (RFR). RuvA specifically binds to HJ cruciform DNA, conferring on it an open structure. The RuvB hexamer acts as an ATP-dependent pump, pulling dsDNA into and through the RuvAB complex. HJ branch migration allows RuvC to scan DNA until it finds its consensus sequence, where it cleaves and resolves the cruciform DNA. The protein is Holliday junction branch migration complex subunit RuvA of Rickettsia rickettsii (strain Iowa).